A 314-amino-acid chain; its full sequence is Short-chain dehydrogenase/reductase sthC (314 aa).

Residues 1-10 (MAPAETTGNV) show a composition bias toward polar residues. The disordered stretch occupies residues 1–27 (MAPAETTGNVQRPEAGKQSMGSFWTQM). NADP(+) contacts are provided by Val-56, Lys-80, Asp-105, Asn-132, and Arg-167. Ser-191 (proton donor) is an active-site residue. 2 residues coordinate NADP(+): Tyr-222 and Lys-226. Residue Tyr-222 is the Proton acceptor of the active site. Catalysis depends on Lys-226, which acts as the Lowers pKa of active site Tyr.

The protein belongs to the short-chain dehydrogenases/reductases (SDR) family.

It catalyses the reaction dehydroprobetaenone I + AH2 = probetaenone I + A. It carries out the reaction betaenone C + AH2 = betaenone B + A. It participates in mycotoxin biosynthesis. In terms of biological role, short-chain dehydrogenase/reductase; part of the gene cluster that mediates the biosynthesis of the phytotoxin stemphyloxin II. The first step of the pathway is the synthesis of dehydroprobetaenone I by the polyketide synthase sthA and the enoyl reductase sthE via condensation of one acetyl-CoA starter unit with 7 malonyl-CoA units and 5 methylations. The C-terminal reductase (R) domain of sthA catalyzes the reductive release of the polyketide chain. Because sthA lacks a designated enoylreductase (ER) domain, the required activity is provided the enoyl reductase sthE. The short-chain dehydrogenase/reductase sthC then catalyzes reduction of dehydroprobetaenone I to probetaenone I. The cytochrome P450 monooxygenase sthF catalyzes successive epoxidation, oxidation (resulting from epoxide opening) and hydroxylation to install a tertiary alcohol in the decaline ring to yield betaenone C from dehydroprobetaenone I and betaenone B from probetaenone I. The FAD-linked oxidoreductase sthB is responsible for the conversion of betaenone C to betaenone A via an intramolecular aldol reaction between C-1 and C-17 to form the bridged tricyclic system in betaenone A. Finally, the cytochrome P450 monooxygenase sthD catalyzes the hydroxylation of C-15 to afford the final metabolite stemphyloxin II. This chain is Short-chain dehydrogenase/reductase sthC, found in Phaeosphaeria nodorum (strain SN15 / ATCC MYA-4574 / FGSC 10173) (Glume blotch fungus).